Consider the following 146-residue polypeptide: Hemoglobin subunit beta (146 aa).

Thr-1 carries the post-translational modification Blocked amino end (Thr). One can recognise a Globin domain in the interval 2–146 (HWTAEERHYI…VAHALTLQYH (145 aa)). Residues His-63 and His-92 each coordinate heme b.

It belongs to the globin family. Heterotetramer of two alpha chains and two beta chains. In terms of tissue distribution, red blood cells.

Functionally, involved in oxygen transport from the lung to the various peripheral tissues. The sequence is that of Hemoglobin subunit beta (HBB) from Caretta caretta (Loggerhead sea turtle).